The primary structure comprises 242 residues: Type III pantothenate kinase (242 aa).

Residue 6–13 (DAGNTRIK) coordinates ATP. Substrate contacts are provided by residues Y90 and 97-100 (GADR). Residue D99 is the Proton acceptor of the active site. T122 lines the ATP pocket. Substrate is bound at residue T172.

Belongs to the type III pantothenate kinase family. Homodimer. NH4(+) serves as cofactor. Requires K(+) as cofactor.

The protein resides in the cytoplasm. It catalyses the reaction (R)-pantothenate + ATP = (R)-4'-phosphopantothenate + ADP + H(+). The protein operates within cofactor biosynthesis; coenzyme A biosynthesis; CoA from (R)-pantothenate: step 1/5. Functionally, catalyzes the phosphorylation of pantothenate (Pan), the first step in CoA biosynthesis. The sequence is that of Type III pantothenate kinase from Aromatoleum aromaticum (strain DSM 19018 / LMG 30748 / EbN1) (Azoarcus sp. (strain EbN1)).